Here is a 555-residue protein sequence, read N- to C-terminus: Suppressor of tumorigenicity 7 protein-like (555 aa).

A run of 4 helical transmembrane segments spans residues 32 to 52 (APWARGLLAVAAGLGLFYAAL), 76 to 96 (FYFALTVTSSFISGLIFVFEW), 504 to 524 (LPFFIHFTAGLCSFSAMLALL), and 531 to 551 (LMVVFAKAVLRVLWPVSAPSV).

This sequence belongs to the ST7 family.

The protein resides in the membrane. The protein is Suppressor of tumorigenicity 7 protein-like (ST7L) of Gallus gallus (Chicken).